The following is a 535-amino-acid chain: 5,6-dihydroxyindole-2-carboxylic acid oxidase (535 aa).

Residues 1–23 form the signal peptide; the sequence is MQLPMLLLVSLPLLLNMFKPAEA. Topologically, residues 24–478 are lumenal, melanosome; it reads QFPRQCATIE…GPLRVTEMIT (455 aa). Intrachain disulfides connect cysteine 29/cysteine 40, cysteine 41/cysteine 64, cysteine 55/cysteine 98, cysteine 100/cysteine 109, and cysteine 112/cysteine 121. Residues asparagine 95 and asparagine 103 are each glycosylated (N-linked (GlcNAc...) asparagine). N-linked (GlcNAc...) asparagine glycosylation occurs at asparagine 180. Residues histidine 191, histidine 214, and histidine 223 each contribute to the Zn(2+) site. Disulfide bonds link cysteine 257–cysteine 260 and cysteine 289–cysteine 302. Residues asparagine 303 and asparagine 349 are each glycosylated (N-linked (GlcNAc...) asparagine). 2 residues coordinate Zn(2+): histidine 376 and histidine 380. Asparagine 384 is a glycosylation site (N-linked (GlcNAc...) asparagine). Histidine 403 is a Zn(2+) binding site. The helical transmembrane segment at 479-499 threads the bilayer; the sequence is IAIVTALVLVAIIFAAAACIV. The Cytoplasmic segment spans residues 500–535; it reads RAKKNRDELHQPLLTDQYQHYSDDYDGIATPSQSVV.

This sequence belongs to the tyrosinase family. Tyrosinase, TYRP1 and TYRP2 may form a multienzyme complex. It depends on Cu(2+) as a cofactor. Requires Zn(2+) as cofactor.

Its subcellular location is the melanosome membrane. It catalyses the reaction 2 5,6-dihydroxyindole-2-carboxylate + O2 = 2 indole-5,6-quinone-2-carboxylate + 2 H2O. It participates in pigment biosynthesis; melanin biosynthesis. Its function is as follows. Plays a role in melanin biosynthesis. Catalyzes the oxidation of 5,6-dihydroxyindole-2-carboxylic acid (DHICA) into indole-5,6-quinone-2-carboxylic acid. May regulate or influence the type of melanin synthesized. Also to a lower extent, capable of hydroxylating tyrosine and producing melanin. This is 5,6-dihydroxyindole-2-carboxylic acid oxidase (TYRP1) from Gallus gallus (Chicken).